Here is a 229-residue protein sequence, read N- to C-terminus: Coiled-coil domain-containing protein 134 (229 aa).

A signal peptide spans 1 to 22 (MDPVQLLSFLLALLLPLGTALD). Residues 192–218 (NTDAFQKALREEEKRRRKEEKRKEIRK) adopt a coiled-coil conformation. The interval 201–229 (REEEKRRRKEEKRKEIRKGPRITRSRSEL) is disordered. Positions 219 to 229 (GPRITRSRSEL) are enriched in basic residues. Residues 226 to 229 (RSEL) carry the Prevents secretion from ER motif.

It belongs to the CCDC134 family.

Its subcellular location is the endoplasmic reticulum lumen. Its function is as follows. Molecular adapter required to prevent protein hyperglycosylation of HSP90B1: during translation, associates with nascent HSP90B1 and the STT3A catalytic component of the OST-A complex and tethers them to a specialized translocon that forms a microenvironment for HSP90B1 folding. In the CCDC134-containing translocon, STT3A associates with the SRT pseudosubstrate motif of HSP90B1, preventing access to facultative glycosylation sites until folding is completed, preventing hyperglycosylation and subsequent degradation of HSP90B1. The polypeptide is Coiled-coil domain-containing protein 134 (ccdc134) (Xenopus tropicalis (Western clawed frog)).